We begin with the raw amino-acid sequence, 228 residues long: PKHD-type hydroxylase Vapar_1809 (228 aa).

A Fe2OG dioxygenase domain is found at 78-179 (QISPPLFNRY…RTASYFWIQS (102 aa)). 3 residues coordinate Fe cation: His97, Asp99, and His160. 2-oxoglutarate is bound at residue Arg170.

Fe(2+) is required as a cofactor. It depends on L-ascorbate as a cofactor.

The polypeptide is PKHD-type hydroxylase Vapar_1809 (Variovorax paradoxus (strain S110)).